The sequence spans 350 residues: Trans-enoyl reductase iliB (350 aa).

50-53 (VDGK) contributes to the NADP(+) binding site. 145–152 (AAIATVGL) is a binding site for substrate. Residues 177–180 (SAAS), Y195, and 242–243 (LD) contribute to the NADP(+) site. 262-266 (TPTQF) provides a ligand contact to substrate. 331 to 332 (IK) serves as a coordination point for NADP(+).

This sequence belongs to the zinc-containing alcohol dehydrogenase family. In terms of assembly, monomer.

The enzyme catalyses N-[(4E,6E,10S,12Z,14E)-6,10-dimethyl-3-oxohexadeca-4,6,12,14-tetraenoyl]-L-tyrosyl-[ACP] = (3E,5S)-3-[(2E,4E,8S,10E,12Z)-1-hydroxy-4,8-dimethyltetradeca-2,4,10,12-tetraen-1-ylidene]-5-[(4-hydroxyphenyl)methyl]pyrrolidine-2,4-dione + holo-[ACP] + H(+). The protein operates within mycotoxin biosynthesis. Trans-enoyl reductase; part of the gene cluster that mediates the biosynthesis of ilicicolin H, a 4-hydroxy-2-pyridonealkaloid that has potent and broad antifungal activities by inhibiting the mitochondrial respiration chain. IliB collaborates with the hybrid PKS-NRPS synthetase iliA to assemble the backbone of ilicicolin H. The PKS portion of iliA and trans-acting enoyl reductase iliB work together to construct an octaketide, and two methyl groups are introduced by the MT domain of iliA during the chain assembly. The nascent chain is then condensed with tyrosine, catalyzed by the iliA C domain, and the resulting PKS-NRPS hybrid is offloaded by the iliA RED domain to form an advanced tetramic acid intermediate. The biosynthesis of ilicicolin H starts with formation of the tetramic acid by the hybrid PKS-NRPS synthetase iliA with the partnering trans-enoyl reductase iliB since iliA lacks a designated enoylreductase (ER) domain. The cytochrome P450 monooxygenase iliC then catalyzes the ring expansion of the tetramate to the acyclic 2-pyridone. The pericyclase iliD further converts the acyclic 2-pyridone into 8-epi-ilicicolin H. 8-epi-ilicicolin H might then spontaneously convert to ilicicolin H since ilicicolin H is produced in the absence of the epimerase iliE, in contrast to what was observed for the Talaromyces variabilis ilicolin H biosynthetic pathway. The chain is Trans-enoyl reductase iliB from Hypocrea jecorina (strain QM6a) (Trichoderma reesei).